Here is a 227-residue protein sequence, read N- to C-terminus: Cleavage and polyadenylation specificity factor subunit 5 (227 aa).

S2 is modified (N-acetylserine). The tract at residues 2–147 (SVVPPNRSQT…DWVIDDCIGN (146 aa)) is necessary for RNA-binding. R15 is subject to Omega-N-methylarginine. K23 and K29 each carry N6-acetyllysine. Y40 is subject to Phosphotyrosine. K56 bears the N6-acetyllysine mark. Residues 76–201 (MRRTVEGVLI…KLVAAPLFEL (126 aa)) enclose the Nudix hydrolase domain. The segment at 81–160 (EGVLIVHEHR…PNFEPPQYPY (80 aa)) is necessary for interactions with PAPOLA and PABPN1. The tract at residues 102 to 104 (TFF) is interaction with RNA. Residues 109 to 130 (GELNPGEDEVEGLKRLMTEILG) carry the Nudix box motif.

This sequence belongs to the Nudix hydrolase family. CPSF5 subfamily. Homodimer (via N- and C-terminus); binds RNA as homodimer. Component of the cleavage factor Im (CFIm) complex which is a heterotetramer composed of two subunits of NUDT21/CPSF5 and two subunits of CPSF6 or CPSF7 or a heterodimer of CPSF6 and CPSF7. The cleavage factor Im (CFIm) complex associates with the CPSF and CSTF complexes to promote the assembly of the core mRNA 3'-processing machinery. Interacts with CPSF6 (via the RRM domain); this interaction is direct and enhances binding to RNA. Interacts with CPSF7. Interacts with FIP1L1; this interaction occurs in a RNA sequence-specific manner. Interacts with PABPN1. Interacts (via N-terminus) with PAPOLA (via C-terminus); this interaction is direct and diminished by acetylation. Interacts with SNRNP70. Interacts with VIRMA. Post-translationally, acetylated mainly by p300/CBP, recruited to the complex by CPSF6. Acetylation decreases interaction with PAPAO. Deacetylated by the class I/II HDACs, HDAC1, HDAC3 and HDAC10, and by the class III HDACs, SIRT1 and SIRT2. Expressed in testis. Expressed in male germ cells (at protein level).

The protein resides in the nucleus. Its subcellular location is the cytoplasm. Its function is as follows. Component of the cleavage factor Im (CFIm) complex that functions as an activator of the pre-mRNA 3'-end cleavage and polyadenylation processing required for the maturation of pre-mRNA into functional mRNAs. CFIm contributes to the recruitment of multiprotein complexes on specific sequences on the pre-mRNA 3'-end, so called cleavage and polyadenylation signals (pA signals). Most pre-mRNAs contain multiple pA signals, resulting in alternative cleavage and polyadenylation (APA) producing mRNAs with variable 3'-end formation. The CFIm complex acts as a key regulator of cleavage and polyadenylation site choice during APA through its binding to 5'-UGUA-3' elements localized in the 3'-untranslated region (UTR) for a huge number of pre-mRNAs. NUDT21/CPSF5 activates indirectly the mRNA 3'-processing machinery by recruiting CPSF6 and/or CPSF7. Binds to 5'-UGUA-3' elements localized upstream of pA signals that act as enhancers of pre-mRNA 3'-end processing. The homodimer mediates simultaneous sequence-specific recognition of two 5'-UGUA-3' elements within the pre-mRNA. Plays a role in somatic cell fate transitions and pluripotency by regulating widespread changes in gene expression through an APA-dependent function. Binds to chromatin. Binds to, but does not hydrolyze mono- and di-adenosine nucleotides. This is Cleavage and polyadenylation specificity factor subunit 5 from Mus musculus (Mouse).